Consider the following 199-residue polypeptide: Probable molybdenum cofactor guanylyltransferase (199 aa).

Residues 6-8 (LAG), Lys-18, Asp-65, and Asp-97 each bind GTP. Asp-97 contributes to the Mg(2+) binding site.

Belongs to the MobA family. Requires Mg(2+) as cofactor.

The protein localises to the cytoplasm. The enzyme catalyses Mo-molybdopterin + GTP + H(+) = Mo-molybdopterin guanine dinucleotide + diphosphate. Transfers a GMP moiety from GTP to Mo-molybdopterin (Mo-MPT) cofactor (Moco or molybdenum cofactor) to form Mo-molybdopterin guanine dinucleotide (Mo-MGD) cofactor. The polypeptide is Probable molybdenum cofactor guanylyltransferase (Staphylococcus aureus (strain Mu50 / ATCC 700699)).